Here is a 611-residue protein sequence, read N- to C-terminus: MKKVQRQMKWLFLAASISAALPVSAAKMVQVDDPSLLEQALSMQARSIVPTQNGFQVVKSVTLPNGKVKVRYQQMYHGLPVFNTSVVATQTEKGIGQVYGMLAQQIDSDVVSTSPQVEQKQAVSIALTHYQQQNPSLTSADLVTENERAQLMVRLDENQMAQMVYLVDFFVATNEPARPFFFIDANSGDVLQTWEGLNHAEATGTGPGGNQKTGFYQYGTDFPGLVINKVGNTCSMMNSAVKTVDMKHATSGGSTFSYSCTDASNYNDYKAINGAYSPLNDAHYFGKVVFDMYKDWMNTTPLTFQLTMRVHYDSNYENAFWNGSSMTFGDGQNTFYPLVDINVSAHEVSHGFTEQNSGLVYQNMSGGINEAFSDIAGEAAEFYMKGSVDWVVGSDIFKSSGGLRYFDQPSKDGRSIDHASQYYNGLNVHYSSGVFNRAYYLLANKANWSVRKGFEVFTVANQLYWTANSTFDQGGCGVAKAAQDLGYNKADVVDAFNQVGVNASCGVVPPTENVLEKGKPVIGLQGTRSSEAFYTFTVASSTSAKVSISLGSGDADLYVKAGSKPTTSSWDCRPYKSGNNEQCTISATPGTTYHVMLKGYSNYSGVTLRLD.

The signal sequence occupies residues 1–25; it reads MKKVQRQMKWLFLAASISAALPVSA. The propeptide occupies 26–199; that stretch reads AKMVQVDDPS…VLQTWEGLNH (174 aa). Position 346 (His346) interacts with Zn(2+). The active site involves Glu347. 2 residues coordinate Zn(2+): His350 and Glu370. His429 (proton donor) is an active-site residue.

This sequence belongs to the peptidase M4 family. The cofactor is Ca(2+). Requires Zn(2+) as cofactor. Post-translationally, seems to be more extensively processed.

The protein resides in the secreted. Functionally, extracellular zinc metalloprotease involved in the virulence mechanism of V.anguillarum. The chain is Virulence metalloprotease (empA) from Vibrio anguillarum (Listonella anguillarum).